An 879-amino-acid chain; its full sequence is Beta-alanyl-bioamine nonribosomal peptide synthetase ebony (879 aa).

An adenylation region spans residues 26 to 540; it reads FEEQQLRHAD…EHVPLLVNGK (515 aa). The Carrier domain occupies 573–650; that stretch reads EDLKLTARDL…EIIEKMAANH (78 aa). Ser-611 carries the post-translational modification O-(pantetheine 4'-phosphoryl)serine. Positions 666 to 679 are condensation; the sequence is LKMEAVPLRLEHRQ. Dopamine is bound at residue Glu-696. Residue Glu-696 participates in histamine binding. Positions 825 and 827 each coordinate beta-alanine.

It belongs to the NRP synthetase family. The cofactor is pantetheine 4'-phosphate. Mg(2+) serves as cofactor. Expressed in the optic neuropils in the lamina and in distinct cells at the distal border of the medulla cortex (at protein level). Expressed in the protocerebrum and thoracic ganglia (at protein level). Expressed in antennal lobes, antennal nerves and subesophagic ganglion (at protein level). Specifically, expressed in epithelial glial cells of the medulla that surround the synaptic cleft of photoreceptor axonal endings (at protein level). Expressed in some cells in the cuticle.

It is found in the cytoplasm. The catalysed reaction is histamine + beta-alanine + ATP = carcinine + AMP + diphosphate + H(+). The enzyme catalyses beta-alanine + ATP + H(+) = beta-alanyl-5'-AMP + diphosphate. It catalyses the reaction beta-alanyl-5'-AMP + holo-[peptidyl-carrier protein] = beta-alanyl-[peptidyl-carrier protein] + AMP + H(+). It carries out the reaction beta-alanyl-[peptidyl-carrier protein] + histamine = carcinine + holo-[peptidyl-carrier protein] + H(+). The catalysed reaction is dopamine + beta-alanine + ATP = beta-alanyl-dopamine + AMP + diphosphate + H(+). The enzyme catalyses beta-alanyl-[peptidyl-carrier protein] + dopamine = beta-alanyl-dopamine + holo-[peptidyl-carrier protein] + H(+). Its function is as follows. Nonribosomal peptide synthase which is required for the regulation of histamine and dopamine levels in various tissues through their condensation with beta-alanine. In epithelial glial cells, plays an essential role in the inactivation of histamine, the main neurotransmitter in the optical nerve system, by catalyzing the conversion of histamine into carcinine. In the cuticle, catalyzes the condensation of beta-alanine with dopamine to form beta-alanyl-dopamine (NBAD), a metabolite involved in the pigmentation and sclerotization of the insect cuticle. Also, regulates the cuticular hydrocarbon composition in females. Acts downstream of the body clock to regulate circadian behavioral rhythms. Can also condense beta-alanine with biogenic amines tyramine, octopamine, and serotonin in vitro. This Drosophila melanogaster (Fruit fly) protein is Beta-alanyl-bioamine nonribosomal peptide synthetase ebony.